Reading from the N-terminus, the 813-residue chain is Glycerol-3-phosphate acyltransferase (813 aa).

Residues 304–309 (CHRSHI) carry the HXXXXD motif motif.

The protein belongs to the GPAT/DAPAT family.

The protein localises to the cell inner membrane. It catalyses the reaction sn-glycerol 3-phosphate + an acyl-CoA = a 1-acyl-sn-glycero-3-phosphate + CoA. Its pathway is phospholipid metabolism; CDP-diacylglycerol biosynthesis; CDP-diacylglycerol from sn-glycerol 3-phosphate: step 1/3. The protein is Glycerol-3-phosphate acyltransferase of Actinobacillus succinogenes (strain ATCC 55618 / DSM 22257 / CCUG 43843 / 130Z).